The following is a 223-amino-acid chain: 7-cyano-7-deazaguanine synthase (223 aa).

Position 10–20 (10–20) interacts with ATP; it reads FSGGQDSTTCL. 4 residues coordinate Zn(2+): cysteine 188, cysteine 197, cysteine 200, and cysteine 203.

It belongs to the QueC family. Zn(2+) is required as a cofactor.

The catalysed reaction is 7-carboxy-7-deazaguanine + NH4(+) + ATP = 7-cyano-7-deazaguanine + ADP + phosphate + H2O + H(+). It participates in purine metabolism; 7-cyano-7-deazaguanine biosynthesis. Its function is as follows. Catalyzes the ATP-dependent conversion of 7-carboxy-7-deazaguanine (CDG) to 7-cyano-7-deazaguanine (preQ(0)). This chain is 7-cyano-7-deazaguanine synthase, found in Phocaeicola vulgatus (strain ATCC 8482 / DSM 1447 / JCM 5826 / CCUG 4940 / NBRC 14291 / NCTC 11154) (Bacteroides vulgatus).